The chain runs to 118 residues: Large ribosomal subunit protein bL20 (118 aa).

Belongs to the bacterial ribosomal protein bL20 family.

In terms of biological role, binds directly to 23S ribosomal RNA and is necessary for the in vitro assembly process of the 50S ribosomal subunit. It is not involved in the protein synthesizing functions of that subunit. The polypeptide is Large ribosomal subunit protein bL20 (Alteromonas mediterranea (strain DSM 17117 / CIP 110805 / LMG 28347 / Deep ecotype)).